The primary structure comprises 1456 residues: CLIP-associating protein 1-B (1456 aa).

HEAT repeat units follow at residues 68-87 (LLGMDILSALVTRLQDRFRT), 88-124 (QIGTVLPSLMDRLGDAKDSVRDQDQNLLIKIMEQASN), and 163-200 (LTLSKIVPHICNLLGDPNSQVRDAAINCLVEIYRHVGE). The tract at residues 237–296 (TDKNFDDEDSVDGNRPSSASSSASSKAPQTARRGVSLGTGRRPGTSSAAPKTGGTAKEGA) is disordered. Residues 284–296 (AAPKTGGTAKEGA) show a composition bias toward low complexity. One copy of the HEAT 4 repeat lies at 442 to 479 (THVPRLIPIITSNCTSKSVAVRRRCYEFLDLLLQEWQT). 2 disordered regions span residues 547–728 (SIVS…DRFG) and 776–796 (GMYSDDDANSDASSACSERSY). Residues 550–569 (SLPQSDRSSSSSQESLNRPL) are compositionally biased toward low complexity. The span at 573 to 594 (RSPTGSTVSRATSKSTTGSLQR) shows a compositional bias: polar residues. 3 stretches are compositionally biased toward low complexity: residues 603-618 (AAATSKTKAASGASTA), 642-656 (QSSGSTTSTASTPAD), and 665-679 (VVSQSQPGSRSSSPG). Over residues 711 to 721 (QGCSRETSPSR) the composition is skewed to polar residues. Residues 785–796 (SDASSACSERSY) show a composition bias toward low complexity. One copy of the HEAT 5 repeat lies at 930 to 967 (QQFNILMRFIVDQTQTPNLKVKVAILKYIESLARQMDP). Disordered stretches follow at residues 1037 to 1080 (LKNS…GLSP) and 1121 to 1147 (VRRDGKKESEMGSCDAGMASPASDLRG). Over residues 1038–1050 (KNSSNSSMGSPSN) the composition is skewed to low complexity. Residues 1062–1074 (SRASPLTSPTNCS) show a composition bias toward polar residues. The segment covering 1121–1130 (VRRDGKKESE) has biased composition (basic and acidic residues). 2 HEAT repeats span residues 1260-1297 (EHFKTILLLLLETLGDKDHAIRALALRVLREILRNQPA) and 1378-1415 (QILPDIIPGLLQGYDNTESSVRKASVFCLVAVYSVIGE).

Belongs to the CLASP family. In terms of assembly, interacts (via C-terminus) with clip1/clip-170, and cenpe.

Its subcellular location is the cytoplasm. The protein localises to the cytoskeleton. The protein resides in the microtubule organizing center. It is found in the centrosome. It localises to the chromosome. Its subcellular location is the centromere. The protein localises to the kinetochore. The protein resides in the spindle. It is found in the golgi apparatus. It localises to the trans-Golgi network. Microtubule plus-end tracking protein that promotes the stabilization of dynamic microtubules during anaphase. Plays a crucial role in chromatin-induced microtubule formation. May also act at microtubule minus ends. May be involved in the nucleation of noncentrosomal microtubules originating from the trans-Golgi network (TGN). In Xenopus laevis (African clawed frog), this protein is CLIP-associating protein 1-B.